The following is a 650-amino-acid chain: Replication protein E1 (650 aa).

Residues 88–90 (KRK) carry the Nuclear localization signal motif. Phosphoserine; by host is present on residues serine 94, serine 98, and serine 109. The Nuclear export signal signature appears at 108-117 (LSPRLDAISI). The tract at residues 134–184 (GYGHTQVDIGAPESQVSGGTQHTKGGGGAVQEAEEERVGGDGEAQCSAQTQ) is disordered. The segment at 185–351 (QTPERAADVL…QTVVGHAMQE (167 aa)) is DNA-binding region. Residues 450–600 (VEFVTFMGAL…CPLKSNGDPV (151 aa)) enclose the SF3 helicase domain. ATP is bound at residue 476–483 (GPSDTGKS). A Glycyl lysine isopeptide (Lys-Gly) (interchain with G-Cter in SUMO) cross-link involves residue lysine 557. The tract at residues 620 to 650 (EGPDEQEEEEDEDGSTSRPFRCVPGEIARPL) is disordered. The segment covering 622–633 (PDEQEEEEDEDG) has biased composition (acidic residues).

It belongs to the papillomaviridae E1 protein family. Can form hexamers. Interacts with E2 protein; this interaction increases E1 DNA binding specificity. Interacts with host DNA polymerase subunit POLA2. Interacts with host single stranded DNA-binding protein RPA1. Interacts with host TOP1; this interaction stimulates the enzymatic activity of TOP1. Phosphorylated. In terms of processing, sumoylated.

Its subcellular location is the host nucleus. The enzyme catalyses Couples ATP hydrolysis with the unwinding of duplex DNA by translocating in the 3'-5' direction.. The catalysed reaction is ATP + H2O = ADP + phosphate + H(+). Its function is as follows. ATP-dependent DNA 3'-5' helicase required for initiation of viral DNA replication. It forms a complex with the viral E2 protein. The E1-E2 complex binds to the replication origin which contains binding sites for both proteins. During the initial step, a dimer of E1 interacts with a dimer of protein E2 leading to a complex that binds the viral origin of replication with high specificity. Then, a second dimer of E1 displaces the E2 dimer in an ATP-dependent manner to form the E1 tetramer. Following this, two E1 monomers are added to each half of the site, which results in the formation of two E1 trimers on the viral ori. Subsequently, two hexamers will be created. The double hexamer acts as a bi-directional helicase machinery and unwinds the viral DNA and then recruits the host DNA polymerase to start replication. The polypeptide is Replication protein E1 (Homo sapiens (Human)).